The primary structure comprises 459 residues: NADH-ubiquinone oxidoreductase chain 4 (459 aa).

13 helical membrane passes run 22 to 42, 60 to 80, 94 to 112, 113 to 133, 145 to 165, 196 to 216, 224 to 244, 257 to 277, 284 to 303, 308 to 330, 351 to 371, 391 to 411, and 435 to 455; these read MIWI…LLFF, PLTT…IMAS, LYLS…TFTA, TELI…LVII, AGTY…IALI, WLAY…HLWL, PIAG…YGMM, MAYP…SISL, SLIA…AILI, SFTG…FCLA, LLPL…ALPP, TTLL…LYMF, and ILMF…DIIT.

It belongs to the complex I subunit 4 family. In terms of assembly, core subunit of respiratory chain NADH dehydrogenase (Complex I) which is composed of 45 different subunits.

It is found in the mitochondrion inner membrane. The enzyme catalyses a ubiquinone + NADH + 5 H(+)(in) = a ubiquinol + NAD(+) + 4 H(+)(out). Functionally, core subunit of the mitochondrial membrane respiratory chain NADH dehydrogenase (Complex I) which catalyzes electron transfer from NADH through the respiratory chain, using ubiquinone as an electron acceptor. Essential for the catalytic activity and assembly of complex I. The sequence is that of NADH-ubiquinone oxidoreductase chain 4 (MT-ND4) from Gorilla gorilla gorilla (Western lowland gorilla).